The primary structure comprises 283 residues: RNase adapter protein RapZ (283 aa).

8 to 15 (GRSGSGKS) lines the ATP pocket. 56 to 59 (DVRN) provides a ligand contact to GTP. An RNA-binding region spans residues 266–283 (RSRGKNVQSRHRTLEKRK).

This sequence belongs to the RapZ-like family. RapZ subfamily. Homotrimer.

Functionally, modulates the synthesis of GlmS, by affecting the processing and stability of the regulatory small RNA GlmZ. When glucosamine-6-phosphate (GlcN6P) concentrations are high in the cell, RapZ binds GlmZ and targets it to cleavage by RNase E. Consequently, GlmZ is inactivated and unable to activate GlmS synthesis. Under low GlcN6P concentrations, RapZ is sequestered and inactivated by an other regulatory small RNA, GlmY, preventing GlmZ degradation and leading to synthesis of GlmS. This Photorhabdus laumondii subsp. laumondii (strain DSM 15139 / CIP 105565 / TT01) (Photorhabdus luminescens subsp. laumondii) protein is RNase adapter protein RapZ.